A 363-amino-acid chain; its full sequence is Serine/threonine-protein kinase SRK2A (363 aa).

The region spanning 4-260 (YELVKDIGAG…IAEIKKHSWF (257 aa)) is the Protein kinase domain. ATP is bound by residues 10–18 (IGAGNFGVA) and lysine 33. Aspartate 123 functions as the Proton acceptor in the catalytic mechanism. Residues 306-363 (SRSIGGFGWGGNGDADGKEEDAEDVEEEEEEVEEEEDDEDEYDKTVKEVHASGEVRIS) are disordered. Residues 310 to 319 (GGFGWGGNGD) are compositionally biased toward gly residues. The segment covering 322-347 (GKEEDAEDVEEEEEEVEEEEDDEDEY) has biased composition (acidic residues). Residues 348 to 363 (DKTVKEVHASGEVRIS) are compositionally biased toward basic and acidic residues.

It belongs to the protein kinase superfamily. Ser/Thr protein kinase family. In terms of assembly, interacts with TOPP1. Expressed in seedlings.

It catalyses the reaction L-seryl-[protein] + ATP = O-phospho-L-seryl-[protein] + ADP + H(+). It carries out the reaction L-threonyl-[protein] + ATP = O-phospho-L-threonyl-[protein] + ADP + H(+). The chain is Serine/threonine-protein kinase SRK2A (SRK2A) from Arabidopsis thaliana (Mouse-ear cress).